We begin with the raw amino-acid sequence, 140 residues long: Small ribosomal subunit protein uS12 (140 aa).

A Hydroxyproline modification is found at P59.

Belongs to the universal ribosomal protein uS12 family.

This chain is Small ribosomal subunit protein uS12 (RPS23), found in Encephalitozoon cuniculi (strain GB-M1) (Microsporidian parasite).